The chain runs to 637 residues: 1-deoxy-D-xylulose-5-phosphate synthase (637 aa).

Residues His76 and 117 to 119 (GHS) each bind thiamine diphosphate. Asp148 lines the Mg(2+) pocket. Thiamine diphosphate is bound by residues 149 to 150 (GA), Asn177, Tyr294, and Glu381. Asn177 lines the Mg(2+) pocket.

Belongs to the transketolase family. DXPS subfamily. In terms of assembly, homodimer. The cofactor is Mg(2+). Thiamine diphosphate is required as a cofactor.

The catalysed reaction is D-glyceraldehyde 3-phosphate + pyruvate + H(+) = 1-deoxy-D-xylulose 5-phosphate + CO2. Its pathway is metabolic intermediate biosynthesis; 1-deoxy-D-xylulose 5-phosphate biosynthesis; 1-deoxy-D-xylulose 5-phosphate from D-glyceraldehyde 3-phosphate and pyruvate: step 1/1. Its function is as follows. Catalyzes the acyloin condensation reaction between C atoms 2 and 3 of pyruvate and glyceraldehyde 3-phosphate to yield 1-deoxy-D-xylulose-5-phosphate (DXP). The sequence is that of 1-deoxy-D-xylulose-5-phosphate synthase from Neisseria meningitidis serogroup B (strain ATCC BAA-335 / MC58).